The following is a 335-amino-acid chain: BTB and MATH domain-containing protein 39 (335 aa).

The region spanning 14 to 141 is the MATH domain; the sequence is MKTLCFKIMN…NGVFTIEFDL (128 aa). One can recognise a BTB domain in the interval 161–226; it reads ADGKLIVEDQ…LQLDEFKVNV (66 aa).

The sequence is that of BTB and MATH domain-containing protein 39 from Caenorhabditis briggsae.